Consider the following 347-residue polypeptide: NADH-quinone oxidoreductase subunit H (347 aa).

Helical transmembrane passes span 21 to 41 (IAGI…IIYA), 87 to 107 (GLFL…WAVI), 120 to 140 (VGLL…VIAG), 160 to 180 (ISYE…AGTF), 194 to 214 (WIIN…MFLI), 259 to 279 (LLMC…PLDI), 282 to 302 (LYLV…FFIF), and 324 to 344 (VFLP…MATG).

It belongs to the complex I subunit 1 family. As to quaternary structure, NDH-1 is composed of 14 different subunits. Subunits NuoA, H, J, K, L, M, N constitute the membrane sector of the complex.

Its subcellular location is the cell inner membrane. It carries out the reaction a quinone + NADH + 5 H(+)(in) = a quinol + NAD(+) + 4 H(+)(out). Its function is as follows. NDH-1 shuttles electrons from NADH, via FMN and iron-sulfur (Fe-S) centers, to quinones in the respiratory chain. The immediate electron acceptor for the enzyme in this species is believed to be ubiquinone. Couples the redox reaction to proton translocation (for every two electrons transferred, four hydrogen ions are translocated across the cytoplasmic membrane), and thus conserves the redox energy in a proton gradient. This subunit may bind ubiquinone. The chain is NADH-quinone oxidoreductase subunit H from Novosphingobium aromaticivorans (strain ATCC 700278 / DSM 12444 / CCUG 56034 / CIP 105152 / NBRC 16084 / F199).